The following is a 462-amino-acid chain: Zinc finger CCCH domain-containing protein 8 (462 aa).

6 C3H1-type zinc fingers span residues 105-133 (RPGEKDCAFYMMTRTCKFGGSCKFDHPQW), 156-184 (QEGEPDCPFFMKTGKCKFGSKCKFNHPKE), 209-237 (RPSEPLCSFYAKTGKCKFRAMCKFNHPKD), 288-316 (RPGEVDCPFYMKMGSCKFGSTCRFNHPDR), 367-395 (RPGATVCDFYMKTGFCKFADRCKFHHPID), and 422-450 (REDAVVCAFYMKTGVCKFGMQCKFDHPPP).

The chain is Zinc finger CCCH domain-containing protein 8 from Oryza sativa subsp. japonica (Rice).